The chain runs to 318 residues: Aspartate carbamoyltransferase catalytic subunit (318 aa).

Carbamoyl phosphate contacts are provided by arginine 59 and threonine 60. Residue lysine 87 participates in L-aspartate binding. Carbamoyl phosphate-binding residues include arginine 109, histidine 137, and glutamine 140. The L-aspartate site is built by arginine 170 and arginine 224. The carbamoyl phosphate site is built by glycine 265 and proline 266.

Belongs to the aspartate/ornithine carbamoyltransferase superfamily. ATCase family. In terms of assembly, heterododecamer (2C3:3R2) of six catalytic PyrB chains organized as two trimers (C3), and six regulatory PyrI chains organized as three dimers (R2).

The enzyme catalyses carbamoyl phosphate + L-aspartate = N-carbamoyl-L-aspartate + phosphate + H(+). The protein operates within pyrimidine metabolism; UMP biosynthesis via de novo pathway; (S)-dihydroorotate from bicarbonate: step 2/3. Catalyzes the condensation of carbamoyl phosphate and aspartate to form carbamoyl aspartate and inorganic phosphate, the committed step in the de novo pyrimidine nucleotide biosynthesis pathway. In Rhizobium rhizogenes (strain K84 / ATCC BAA-868) (Agrobacterium radiobacter), this protein is Aspartate carbamoyltransferase catalytic subunit.